Consider the following 352-residue polypeptide: Protein SIS1 (352 aa).

The region spanning 4-70 (ETKLYDLLGV…REIYDQYGLE (67 aa)) is the J domain. Ser275 carries the post-translational modification Phosphoserine. The interval 300 to 325 (VQPVQPSQTSTYPGQGMPTPKNPSQR) is disordered. Residues 301-312 (QPVQPSQTSTYP) are compositionally biased toward polar residues.

Interacts with polyadenylate-binding protein PAB1.

It is found in the cytoplasm. The protein resides in the nucleus. Its function is as follows. Required for nuclear migration during mitosis. It is required for the normal initiation of translation. Might mediate the dissociation of a specific protein complex of the translation machinery. Essential for viability. The chain is Protein SIS1 (SIS1) from Saccharomyces cerevisiae (strain ATCC 204508 / S288c) (Baker's yeast).